A 118-amino-acid chain; its full sequence is Large ribosomal subunit protein bL17 (118 aa).

It belongs to the bacterial ribosomal protein bL17 family. Part of the 50S ribosomal subunit. Contacts protein L32.

The chain is Large ribosomal subunit protein bL17 from Campylobacter hominis (strain ATCC BAA-381 / DSM 21671 / CCUG 45161 / LMG 19568 / NCTC 13146 / CH001A).